Reading from the N-terminus, the 322-residue chain is Putative UDP-N-acetylglucosamine--dolichyl-phosphate N-acetylglucosaminephosphotransferase (322 aa).

Transmembrane regions (helical) follow at residues 5–25 (AILL…VWVI), 46–66 (IPLL…FSLL), 76–96 (IPAV…DDIF), 102–122 (VRAF…VGHS), 123–143 (IISI…IIII), 160–180 (LNGL…YIGL), 186–206 (TYQA…FLIF), 222–242 (FIGA…ALAI), and 295–315 (YQVV…AVIL).

The protein belongs to the glycosyltransferase 4 family.

The protein localises to the cell membrane. The enzyme catalyses a di-trans,poly-cis-dolichyl phosphate + UDP-N-acetyl-alpha-D-glucosamine = an N-acetyl-alpha-D-glucosaminyl-diphospho-di-trans,poly-cis-dolichol + UMP. Inhibited by tunicamycin. The sequence is that of Putative UDP-N-acetylglucosamine--dolichyl-phosphate N-acetylglucosaminephosphotransferase (gnpTA) from Saccharolobus solfataricus (strain ATCC 35092 / DSM 1617 / JCM 11322 / P2) (Sulfolobus solfataricus).